Here is a 129-residue protein sequence, read N- to C-terminus: METKNAKAIARKVSIAPRKARLVVDLIRGKNIAQAQAILTFTPKVAAPVILKLLNSAVSNAVNNLKLNREQLYVKEVFVNEGFRLKRMFPRAKGSGDMIKKRTSHITLVITSSTNLQTSKEEEQSGSKN.

This sequence belongs to the universal ribosomal protein uL22 family. In terms of assembly, part of the 50S ribosomal subunit.

Functionally, this protein binds specifically to 23S rRNA; its binding is stimulated by other ribosomal proteins, e.g. L4, L17, and L20. It is important during the early stages of 50S assembly. It makes multiple contacts with different domains of the 23S rRNA in the assembled 50S subunit and ribosome. Its function is as follows. The globular domain of the protein is located near the polypeptide exit tunnel on the outside of the subunit, while an extended beta-hairpin is found that lines the wall of the exit tunnel in the center of the 70S ribosome. This Aster yellows witches'-broom phytoplasma (strain AYWB) protein is Large ribosomal subunit protein uL22.